The following is a 316-amino-acid chain: Aspartate carbamoyltransferase catalytic subunit (316 aa).

The carbamoyl phosphate site is built by arginine 58 and threonine 59. Position 86 (lysine 86) interacts with L-aspartate. Carbamoyl phosphate is bound by residues arginine 108, histidine 136, and glutamine 139. 2 residues coordinate L-aspartate: arginine 169 and arginine 223. Residues glycine 265 and proline 266 each coordinate carbamoyl phosphate.

The protein belongs to the aspartate/ornithine carbamoyltransferase superfamily. ATCase family. In terms of assembly, heterododecamer (2C3:3R2) of six catalytic PyrB chains organized as two trimers (C3), and six regulatory PyrI chains organized as three dimers (R2).

The catalysed reaction is carbamoyl phosphate + L-aspartate = N-carbamoyl-L-aspartate + phosphate + H(+). It participates in pyrimidine metabolism; UMP biosynthesis via de novo pathway; (S)-dihydroorotate from bicarbonate: step 2/3. Functionally, catalyzes the condensation of carbamoyl phosphate and aspartate to form carbamoyl aspartate and inorganic phosphate, the committed step in the de novo pyrimidine nucleotide biosynthesis pathway. The sequence is that of Aspartate carbamoyltransferase catalytic subunit from Anaeromyxobacter sp. (strain Fw109-5).